A 66-amino-acid chain; its full sequence is Beta-defensin 107A (66 aa).

An N-terminal signal peptide occupies residues M1–T22. 2 disulfides stabilise this stretch: C37/C51 and C41/C60.

This sequence belongs to the beta-defensin family.

The protein localises to the secreted. In terms of biological role, has antibacterial activity. In Hylobates lar (Lar gibbon), this protein is Beta-defensin 107A (DEFB107A).